A 251-amino-acid polypeptide reads, in one-letter code: FHA domain-containing protein FHA1 (251 aa).

The FHA domain occupies 32-89; the sequence is IILGRNSKKSTVDVDLSSLGGGMNISRNHARIFYDFTRRRFSLEVLGKNGCFVEGVLH. Residues 163–174 show a composition bias toward acidic residues; the sequence is EYDDEDDDEEED. Residues 163–209 form a disordered region; sequence EYDDEDDDEEEDIRGSGKKTWRDGHEGVYASGEKKREGRSKADREAD. The span at 182–206 shows a compositional bias: basic and acidic residues; it reads TWRDGHEGVYASGEKKREGRSKADR.

In terms of tissue distribution, expressed in roots and vascular tissues near the shoot apex in young seedlings.

It localises to the nucleus. Functionally, may play a role in the control of plant organ development. Does not show transactivation activity in yeast. This is FHA domain-containing protein FHA1 from Arabidopsis thaliana (Mouse-ear cress).